Reading from the N-terminus, the 449-residue chain is Glucose-6-phosphate isomerase (449 aa).

The active-site Proton donor is E290. Residues H311 and K425 contribute to the active site.

This sequence belongs to the GPI family.

It is found in the cytoplasm. The catalysed reaction is alpha-D-glucose 6-phosphate = beta-D-fructose 6-phosphate. It participates in carbohydrate biosynthesis; gluconeogenesis. Its pathway is carbohydrate degradation; glycolysis; D-glyceraldehyde 3-phosphate and glycerone phosphate from D-glucose: step 2/4. Functionally, catalyzes the reversible isomerization of glucose-6-phosphate to fructose-6-phosphate. This Exiguobacterium sibiricum (strain DSM 17290 / CCUG 55495 / CIP 109462 / JCM 13490 / 255-15) protein is Glucose-6-phosphate isomerase.